The chain runs to 417 residues: MHLLYVGLTHRETPLTILEKAHFSDQEGLKALKLLKREKSILENIILSTCNRTELYLVVDQLHTGRYYSKHFLADWFQIPVKELEEYLVFREGDEALRHLLRVSIGLESKIVGESQVLGQLKQAFLTAQDAGTTGIVLNQAFKQALTFAKRMHDTYRINDRPISIGLTAIQELDRMGLDYSTKKIAVIGLGEIGQLVTKYALQRPFESVMLLNRTVSKAQAFLTEDRVSAHGWDELEEVLADADVVFSAVKTEEYIIFPSMLKEGAIVFDLCLPRSCHPSSSLKLYNIENLTNQLEQYKAERQEIAGRIALEIDEELVKFADWRQQLGIIPLIQEIRDKALEAQASAMESLNRKIPDLTEREQKQISKHMKSIINQVLKEPILQLKELSVGEHSDYDIALIAKIFGLHRERGKDEGH.

Residues 49-52 (TCNR), S109, 114-116 (ESQ), and Q120 contribute to the substrate site. Residue C50 is the Nucleophile of the active site. 189-194 (GLGEIG) lines the NADP(+) pocket.

The protein belongs to the glutamyl-tRNA reductase family. As to quaternary structure, homodimer.

It carries out the reaction (S)-4-amino-5-oxopentanoate + tRNA(Glu) + NADP(+) = L-glutamyl-tRNA(Glu) + NADPH + H(+). Its pathway is porphyrin-containing compound metabolism; protoporphyrin-IX biosynthesis; 5-aminolevulinate from L-glutamyl-tRNA(Glu): step 1/2. Catalyzes the NADPH-dependent reduction of glutamyl-tRNA(Glu) to glutamate 1-semialdehyde (GSA). The chain is Glutamyl-tRNA reductase from Streptococcus sanguinis (strain SK36).